A 353-amino-acid chain; its full sequence is Glucose import ATP-binding protein GlcV (353 aa).

The ABC transporter domain occupies 4 to 241 (IIVKNVSKVF…PVSIQVASLI (238 aa)). ATP contacts are provided by residues 40-46 (SGAGKTT), glutamine 89, and glutamate 166.

The protein belongs to the ABC transporter superfamily. The complex is composed of two ATP-binding proteins (GlcV), two transmembrane proteins (GlcT and GlcU) and a solute-binding protein (GlcS). Forms transient head-to-tail homodimers in the presence of ATP-Mg(2+).

Its subcellular location is the cell membrane. It carries out the reaction D-glucose(out) + ATP + H2O = D-glucose(in) + ADP + phosphate + H(+). Its function is as follows. Part of the ABC transporter complex GlcSTUV involved in glucose uptake. Responsible for energy coupling to the transport system. In vitro, as a free subunit, exhibits a constitutive ATPase activity. The chain is Glucose import ATP-binding protein GlcV from Saccharolobus solfataricus (strain ATCC 35092 / DSM 1617 / JCM 11322 / P2) (Sulfolobus solfataricus).